The chain runs to 869 residues: Dynamin-3 (869 aa).

The region spanning 28 to 294 (LLELPQIAVV…LTNHIRDTLP (267 aa)) is the Dynamin-type G domain. The tract at residues 38 to 45 (GGQSAGKS) is G1 motif. 38 to 46 (GGQSAGKSS) lines the GTP pocket. Positions 64-66 (VTR) are G2 motif. Positions 136–139 (DLPG) are G3 motif. A G4 motif region spans residues 205–208 (TKLD). Residue 205–211 (TKLDLMD) coordinates GTP. Tyr-231 bears the Phosphotyrosine mark. A G5 motif region spans residues 235-238 (VNRS). 236–239 (NRSQ) contributes to the GTP binding site. Lys-299 carries the post-translational modification N6-acetyllysine. The PH domain occupies 525–631 (IVIRKGWLTV…WKASLLRAGV (107 aa)). Phosphotyrosine is present on Tyr-603. Lys-604 is subject to N6-acetyllysine. Positions 659-750 (VETIRNLVDS…IIGDINTVTV (92 aa)) constitute a GED domain. Residues 752–869 (TPAPPPVDDS…IRPLESSLLD (118 aa)) form a disordered region. Phosphoserine is present on residues Ser-769 and Ser-773. Residues 775–796 (TTQRRLTLSAPLPRPASSRGPA) show a composition bias toward low complexity. 2 stretches are compositionally biased toward pro residues: residues 797 to 822 (PAIPSPGPHSGAPPVPFRPGPLPPFP) and 832 to 855 (PQVPSRPTRAPPSVPSRRPPPSPT). Phosphoserine is present on Ser-853.

It belongs to the TRAFAC class dynamin-like GTPase superfamily. Dynamin/Fzo/YdjA family. As to expression, isoform-specific expression in germ-cell-depleted testis (Sertoli cells), brain (peripheral sensory neurons), lung and heart.

The protein localises to the cytoplasm. The protein resides in the cytoskeleton. It is found in the cytoplasmic vesicle. Its subcellular location is the golgi apparatus. It catalyses the reaction GTP + H2O = GDP + phosphate + H(+). In terms of biological role, microtubule-associated force-producing protein involved in producing microtubule bundles and able to bind and hydrolyze GTP. Most probably involved in vesicular trafficking processes, in particular endocytosis. The protein is Dynamin-3 (Dnm3) of Rattus norvegicus (Rat).